The sequence spans 188 residues: Threonylcarbamoyl-AMP synthase (188 aa).

Residues 3–188 (QLHPSEIKDI…RSGKILRNGQ (186 aa)) enclose the YrdC-like domain.

The protein belongs to the SUA5 family. TsaC subfamily.

It is found in the cytoplasm. The catalysed reaction is L-threonine + hydrogencarbonate + ATP = L-threonylcarbamoyladenylate + diphosphate + H2O. Its function is as follows. Required for the formation of a threonylcarbamoyl group on adenosine at position 37 (t(6)A37) in tRNAs that read codons beginning with adenine. Catalyzes the conversion of L-threonine, HCO(3)(-)/CO(2) and ATP to give threonylcarbamoyl-AMP (TC-AMP) as the acyladenylate intermediate, with the release of diphosphate. This Shewanella sp. (strain MR-4) protein is Threonylcarbamoyl-AMP synthase.